The chain runs to 360 residues: MSFFRCIGRSALFMLDPEHAHRLAIVGLKSGLNGCQKVVDKRLSVTIAGLKFKNFIGLAAGFDKNAEVVDEIFRLGFGFTEIGTVTPKPQIGNPKPRLFRLKEDEAIINRMGFNNDGHQVVDDRLRICKKAGVVGVNIGANKDTVDKIDDYTVGIAHFYDVADYFTVNISSPNTPGLRDLQARDSLHLLLNAISKARKEQEKKHGFSIPIFLKIAPDLSEKELDDIAEEIKLSDFDGLIVSNTTLSRQGLNNSHFSNEEGGLSGRPLFERSTIVLAKMRQKLGKEIAIIGVGGVKDAQTALEKVKAGADLIQLYSGMVYEGPNLVITILKEILQMMQQDGVDNIKDYRDHNLEHWAKFPL.

FMN contacts are provided by residues 60–64 and threonine 84; that span reads AGFDK. Lysine 64 contributes to the substrate binding site. Substrate is bound at residue 109–113; it reads NRMGF. The FMN site is built by asparagine 137 and asparagine 168. Asparagine 168 is a substrate binding site. The active-site Nucleophile is serine 171. Asparagine 173 contributes to the substrate binding site. 2 residues coordinate FMN: lysine 213 and serine 241. 242–243 provides a ligand contact to substrate; it reads NT. FMN contacts are provided by residues glycine 264, glycine 293, and 314–315; that span reads YS.

The protein belongs to the dihydroorotate dehydrogenase family. Type 2 subfamily. Monomer. FMN serves as cofactor.

It is found in the cell membrane. The catalysed reaction is (S)-dihydroorotate + a quinone = orotate + a quinol. It functions in the pathway pyrimidine metabolism; UMP biosynthesis via de novo pathway; orotate from (S)-dihydroorotate (quinone route): step 1/1. Functionally, catalyzes the conversion of dihydroorotate to orotate with quinone as electron acceptor. This is Dihydroorotate dehydrogenase (quinone) from Bartonella tribocorum (strain CIP 105476 / IBS 506).